The following is a 56-amino-acid chain: Large ribosomal subunit protein bL32 (56 aa).

The segment at 1–26 is disordered; sequence MAVQQNKKSRSKRGMRRSHDALSTAQ. Residues 7–16 show a composition bias toward basic residues; sequence KKSRSKRGMR.

Belongs to the bacterial ribosomal protein bL32 family.

In Shewanella baltica (strain OS155 / ATCC BAA-1091), this protein is Large ribosomal subunit protein bL32.